The primary structure comprises 122 residues: Large ribosomal subunit protein eL8 (122 aa).

The protein belongs to the eukaryotic ribosomal protein eL8 family. Part of the 50S ribosomal subunit. Probably part of the RNase P complex.

The protein localises to the cytoplasm. In terms of biological role, multifunctional RNA-binding protein that recognizes the K-turn motif in ribosomal RNA, the RNA component of RNase P, box H/ACA, box C/D and box C'/D' sRNAs. The polypeptide is Large ribosomal subunit protein eL8 (Methanothrix thermoacetophila (strain DSM 6194 / JCM 14653 / NBRC 101360 / PT) (Methanosaeta thermophila)).